The following is a 703-amino-acid chain: Methionine--tRNA ligase (703 aa).

A 'HIGH' region motif is present at residues Pro-15–His-25. The Zn(2+) site is built by Cys-147, Cys-150, Cys-160, and Cys-163. Residues Lys-345–Ser-349 carry the 'KMSKS' region motif. ATP is bound at residue Lys-348. Residues Asp-602–Ser-703 form the tRNA-binding domain.

Belongs to the class-I aminoacyl-tRNA synthetase family. MetG type 1 subfamily. As to quaternary structure, homodimer. Zn(2+) is required as a cofactor.

It is found in the cytoplasm. The enzyme catalyses tRNA(Met) + L-methionine + ATP = L-methionyl-tRNA(Met) + AMP + diphosphate. Functionally, is required not only for elongation of protein synthesis but also for the initiation of all mRNA translation through initiator tRNA(fMet) aminoacylation. This Chlorobaculum tepidum (strain ATCC 49652 / DSM 12025 / NBRC 103806 / TLS) (Chlorobium tepidum) protein is Methionine--tRNA ligase.